A 490-amino-acid polypeptide reads, in one-letter code: Betaine aldehyde dehydrogenase (490 aa).

Ser26, Ile27, and Asp93 together coordinate K(+). 150-152 lines the NAD(+) pocket; it reads GAW. The active-site Charge relay system is Lys162. Position 176-179 (176-179) interacts with NAD(+); the sequence is KPSE. Val180 lines the K(+) pocket. 230 to 233 is a binding site for NAD(+); it reads GVAT. Residue Leu246 participates in K(+) binding. The active-site Proton acceptor is the Glu252. NAD(+) contacts are provided by Gly254, Cys286, and Glu387. Cys286 functions as the Nucleophile in the catalytic mechanism. Position 286 is a cysteine sulfenic acid (-SOH) (Cys286). Residues Lys457 and Gly460 each contribute to the K(+) site. Catalysis depends on Glu464, which acts as the Charge relay system.

This sequence belongs to the aldehyde dehydrogenase family. Dimer of dimers. K(+) serves as cofactor.

The enzyme catalyses betaine aldehyde + NAD(+) + H2O = glycine betaine + NADH + 2 H(+). Its pathway is amine and polyamine biosynthesis; betaine biosynthesis via choline pathway; betaine from betaine aldehyde: step 1/1. Involved in the biosynthesis of the osmoprotectant glycine betaine. Catalyzes the irreversible oxidation of betaine aldehyde to the corresponding acid. This Stutzerimonas stutzeri (strain A1501) (Pseudomonas stutzeri) protein is Betaine aldehyde dehydrogenase.